The sequence spans 790 residues: Threonine--tRNA ligase 2, cytoplasmic (790 aa).

A2 is modified (N-acetylalanine). Positions 13-68 (SRLQRQEEDIRWLCAEVQRLRDEQLRGPERGQAEGPRLTREVAQLQAENRDLHQRL) form a coiled coil. Residues 80-117 (RTEAGRAAAHEPPTQNQEKDTKKKRLKQSEPGREVKQP) form a disordered region. The segment covering 96 to 117 (QEKDTKKKRLKQSEPGREVKQP) has biased composition (basic and acidic residues). A TGS domain is found at 148 to 210 (NVISVRVAGG…EGDSTVELLM (63 aa)). A Phosphoserine modification is found at S441. The Nuclear localization signal motif lies at 774–780 (KLKNLKK).

The protein belongs to the class-II aminoacyl-tRNA synthetase family. In terms of assembly, may be a component of the multisynthetase complex (MSC), a large multi-subunit complex which contains at least eight different aminoacyl-tRNA synthetases plus three auxillary subunits AIMP1, AIMP2 and EEF1E1. Interacts with the MSC components EPRS1, AIMP1, AIMP2 and KARS1. Ubiquitous (at protein level). Strongly expressed in muscle (at protein level). Moderately expressed in heart and liver (at protein level). Weakly expressed in stomach, kidney, testis, spleen, brain, fat and lung (at protein level).

The protein localises to the cytoplasm. Its subcellular location is the nucleus. It catalyses the reaction tRNA(Thr) + L-threonine + ATP = L-threonyl-tRNA(Thr) + AMP + diphosphate + H(+). Its function is as follows. Catalyzes the attachment of threonine to tRNA(Thr) in a two-step reaction: threonine is first activated by ATP to form Thr-AMP and then transferred to the acceptor end of tRNA(Thr). Also edits incorrectly charged tRNA(Thr) via its editing domain, at the post-transfer stage. This chain is Threonine--tRNA ligase 2, cytoplasmic (Tars3), found in Mus musculus (Mouse).